A 587-amino-acid chain; its full sequence is MKRSMYAGRVREEHIGQEITLKGWVGRRRDLGGLIFIDLRDREGIMQLVINPEKVSAEVMATAESLRSEFVIEVTGQVAAREQANDKLPTGAVELNVTALIVLNTAKTTPFEIKDGIEANDDTRLRYRYLDLRRPEMLENLKLRAKVTHSIRNYLDELEFIDVETPFLSKSTPEGARDYLVPSRVNKGHFYALPQSPQITKQLLMNAGFDRYYQIVKCFRDEDLRGDRQPEFTQVDLETSFLTEQEIQDITEGLIARVMKETKGIEVTLPFPRMKYDDAMALYGSDKPDTRFDMLLQDLTEVVKGVDFKVFSEALAVKAIVVKGAADNYSRKDIDKMTEVAKQYGAKGLAWVKVVDGELNGPVAKFLTGIQEELTTALALEDKDLVLFVADTLEVANATLGALRGRIAKELGLIDNDKFNFLWVVDWPMFEWSEEEGRYMSAHHPFTLPQEETAHELEGDLAKVRAIAYDIVLNGYELGGGSLRINQKDLQERMFKALGFSAEEANDQFGFLLEAMDYGFPPHGGLAIGLDRFVMLLAGEENIREVIAFPKNNKATDPMTQAPSTVALKQLEELSLQVEEDETNKTN.

Position 174 (Glu174) interacts with L-aspartate. The segment at 198–201 (QITK) is aspartate. An L-aspartate-binding site is contributed by Arg220. ATP is bound by residues 220–222 (RDE) and Gln229. His443 is a binding site for L-aspartate. Glu477 serves as a coordination point for ATP. Arg484 lines the L-aspartate pocket. Residue 529 to 532 (GLDR) participates in ATP binding.

It belongs to the class-II aminoacyl-tRNA synthetase family. Type 1 subfamily. In terms of assembly, homodimer.

It is found in the cytoplasm. The enzyme catalyses tRNA(Asp) + L-aspartate + ATP = L-aspartyl-tRNA(Asp) + AMP + diphosphate. Catalyzes the attachment of L-aspartate to tRNA(Asp) in a two-step reaction: L-aspartate is first activated by ATP to form Asp-AMP and then transferred to the acceptor end of tRNA(Asp). This is Aspartate--tRNA ligase from Streptococcus pneumoniae serotype 19F (strain G54).